The sequence spans 195 residues: Thymidine kinase (195 aa).

Residues 15 to 22 and 88 to 91 contribute to the ATP site; these read GSMFSGKS and DEVQ. Catalysis depends on glutamate 89, which acts as the Proton acceptor. Phenylalanine 120 lines the substrate pocket. Positions 145 and 148 each coordinate Zn(2+). Substrate-binding positions include 170-174 and tyrosine 179; that span reads IILVG. Zn(2+) is bound by residues cysteine 183 and cysteine 186.

It belongs to the thymidine kinase family. As to quaternary structure, homotetramer.

The protein resides in the cytoplasm. The catalysed reaction is thymidine + ATP = dTMP + ADP + H(+). This chain is Thymidine kinase, found in Bacillus cereus (strain ATCC 14579 / DSM 31 / CCUG 7414 / JCM 2152 / NBRC 15305 / NCIMB 9373 / NCTC 2599 / NRRL B-3711).